The primary structure comprises 296 residues: Small ribosomal subunit protein uS2 (296 aa).

Disordered regions lie at residues Met-1–Gln-24 and His-270–Gln-296.

The protein belongs to the universal ribosomal protein uS2 family.

This chain is Small ribosomal subunit protein uS2, found in Mycoplasmopsis synoviae (strain 53) (Mycoplasma synoviae).